The chain runs to 229 residues: E3 ubiquitin ligase TRIM40 (229 aa).

Residues 14-57 (CPICQESLKEAVSTNCGHLFCRVCLTQHVEKASASGVFCCPLCR) form an RING-type zinc finger. The segment at 66–107 (GTGYICPNHQKRVCRFCEESRLLLCVECLVSPEHMSHHELTI) adopts a B box-type zinc-finger fold. Zn(2+)-binding residues include C71, H74, C93, and H99. A coiled-coil region spans residues 107–154 (IENALSHYKERLNRRSRKLRKDIAELQRLKAQQEKKLQALQQWLGQLE).

This sequence belongs to the TRIM/RBCC family. In terms of assembly, interacts with NEDD8.

It catalyses the reaction S-ubiquitinyl-[E2 ubiquitin-conjugating enzyme]-L-cysteine + [acceptor protein]-L-lysine = [E2 ubiquitin-conjugating enzyme]-L-cysteine + N(6)-ubiquitinyl-[acceptor protein]-L-lysine.. Functionally, E3 ubiquitin-protein ligase that plays a role in the limitation of the innate immune response. Mediates inhibition of the RLR signaling pathway by ubiquitinating RIGI and IFIH1 receptors, leading to their proteasomal degradation. Also promotes the neddylation of IKBKG/NEMO, stabilizing NFKBIA, and thereby inhibiting of NF-kappa-B nuclear translocation and activation. The sequence is that of E3 ubiquitin ligase TRIM40 (TRIM40) from Pan troglodytes (Chimpanzee).